We begin with the raw amino-acid sequence, 146 residues long: MSLVAYDSEEEEQTSLVNENNDIKGRSEEPHWKIPNSPKAEVDTELEKKIKQFIKLKAKGIHFHTRLSENENFRNPKLLDNLQDFLDIKEPRGTMISKDMWDPTDFHKNVYASALSKSQDEMIARRENYQKHDRTEIKFQTSQHPK.

The tract at residues 1–40 (MSLVAYDSEEEEQTSLVNENNDIKGRSEEPHWKIPNSPKA) is disordered. Over residues 21 to 32 (NDIKGRSEEPHW) the composition is skewed to basic and acidic residues.

It localises to the nucleus. Functionally, has a role in meiosis. This chain is Meiotically up-regulated gene 151 protein (mug151), found in Schizosaccharomyces pombe (strain 972 / ATCC 24843) (Fission yeast).